The primary structure comprises 120 residues: MLTFNQLIKNSRKKKNKFKNSILNRCPQKKGICLKVFTKSPKKPNSALRKVVKIRLSNNKEIIAYIPGEGYAIQEHNYALIKGGKVQDLPGIRYKIIRGALNVSGVKNRKSSRSKYGTKK.

It belongs to the universal ribosomal protein uS12 family. In terms of assembly, part of the 30S ribosomal subunit.

The protein resides in the plastid. It localises to the apicoplast. Functionally, with S4 and S5 plays an important role in translational accuracy. Located at the interface of the 30S and 50S subunits. The protein is Small ribosomal subunit protein uS12c (rps12) of Eimeria tenella (Coccidian parasite).